We begin with the raw amino-acid sequence, 136 residues long: MINFIRSYALYFAWAISCAGTLISIFYSYILNVEPCILCYYQRICLFPLTVILGISAYREDSSIKLYILPQAVLGLGISIYQVFLQEIPGMQLDICGRVSCSTKIFLFSYVTIPMASVVAFGAIVCLLVLTKKYRG.

The chain crosses the membrane as a helical span at residues 7-26; sequence SYALYFAWAISCAGTLISIF. Cys36 and Cys39 form a disulfide bridge. A run of 2 helical transmembrane segments spans residues 41–60 and 67–84; these read YQRI…AYRE and YILP…YQVF. The cysteines at positions 96 and 101 are disulfide-linked. The chain crosses the membrane as a helical span at residues 109–131; it reads SYVTIPMASVVAFGAIVCLLVLT.

It belongs to the DsbB family. BdbC subfamily.

Its subcellular location is the cell inner membrane. Its function is as follows. Required for disulfide bond formation in some proteins. In Chlamydia pneumoniae (Chlamydophila pneumoniae), this protein is Probable disulfide formation protein.